A 1259-amino-acid chain; its full sequence is MDASEEPLPPVIYTMENKPIVTCAGDQNLFTSVYPTLSQQLPREPMEWRRSYGRAPKMIHLESNFVQFKEELLPKEGNKALLTFPFLHIYWTECCDTEVYKATVKDDLTKWQNVLKAHSSVDWLIVIVENDAKKKNKTNILPRTSIVDKIRNDFCNKQSDRCVVLSDPLKDSSRTQESWNAFLTKLRTLLLMSFTKNLGKFEDDMRTLREKRTEPGWSFCEYFMVQEELAFVFEMLQQFEDALVQYDELDALFSQYVVNFGAGDGANWLTFFCQPVKSWNGLILRKPIDMEKRESIQRREATLLDLRSYLFSRQCTLLLFLQRPWEVAQRALELLHNCVQELKLLEVSVPPGALDCWVFLSCLEVLQRIEGCCDRAQIDSNIAHTVGLWSYATEKLKSLGYLCGLVSEKGPNSEDLNRTVDLLAGLGAERPETANTAQSPYKKLKEALSSVEAFEKHYLDLSHATIEMYTSIGRIRSAKFVGKDLAEFYMRKKAPQKAEIYLQGALKNYLAEGWALPITHTRKQLAECQKHLGQIENYLQTSSLLASDHHLTEEERKHFCQEILDFASQPSDSPGHKIVLPMHSFAQLRDLHFDPSNAVVHVGGVLCVEITMYSQMPVPVHVEQIVVNVHFSIEKNSYRKTAEWLTKHKTSNGIINFPPETAPFPVSQNSLPALELYEMFERSPSDNSLNTTGIICRNVHMLLRRQESSSSLEMPSGVALEEGAHVLRCSHVTLEPGANQITFRTQAKEPGTYTLRQLCASVGSVWFVLPHIYPIVQYDVYSQEPQLHVEPLADSLLAGIPQRVKFTVTTGHYTIKNGDSLQLSNAEAMLILCQAESRAVVYSNTREQSSEAALRIQSSDKVTSISLPVAPAYHVIEFELEVLSLPSAPALGGESDMLGMAEPHRKHKDKQRTGRCMVTTDHKVSIDCPWSIYSTVIALTFSVPFRTTHSLLSSGTRKYVQVCVQNLSELDFQLSDSYLVDTGDSTDLQLVPLNTQSQQPIYSKQSVFFVWELKWTEEPPPSLHCRFSVGFSPASEEQLSISLKPYTYEFKVENFFTLYNVKAEIFPPSGMEYCRTGSLCSLEVLITRLSDLLEVDKDEALTESDEHFSTKLMYEVVDNSSNWAVCGKSCGVISMPVAARATHRVHMEVMPLFAGYLPLPDVRLFKYLPHHSAHSSQLDADSWIENDSLSVDKHGDDQPDSSSLKSRGSVHSACSSEHKGLPMPRLQALPAGQVFNSSSGTQVLVIPSQDDHVLEVSVT.

Ser-708 bears the Phosphoserine mark. Residues 1189–1222 form a disordered region; that stretch reads LSVDKHGDDQPDSSSLKSRGSVHSACSSEHKGLP.

It belongs to the TRAPPC10 family. As to quaternary structure, specific component of the multisubunit TRAPP II complex, which includes at least TRAPPC1, TRAPPC2, TRAPPC3, TRAPPC4, TRAPPC5, TRAPPC6A/B, TRAPPC9, TRAPPC10 and TRAPPC14. TRAPPC9, TRAPPC10 and TRAPPC14 are specific subunits of the TRAPP II complex. Interacts with TRAPPC14. As to expression, expressed in all tissues examined.

The protein resides in the golgi apparatus. It localises to the cis-Golgi network. Specific subunit of the TRAPP (transport protein particle) II complex, a highly conserved vesicle tethering complex that functions in late Golgi trafficking as a membrane tether. In Homo sapiens (Human), this protein is Trafficking protein particle complex subunit 10 (TRAPPC10).